The following is a 66-amino-acid chain: Large ribosomal subunit protein bL31 (66 aa).

C16, C18, C36, and C39 together coordinate Zn(2+).

It belongs to the bacterial ribosomal protein bL31 family. Type A subfamily. In terms of assembly, part of the 50S ribosomal subunit. It depends on Zn(2+) as a cofactor.

Its function is as follows. Binds the 23S rRNA. The polypeptide is Large ribosomal subunit protein bL31 (Campylobacter fetus subsp. fetus (strain 82-40)).